A 553-amino-acid polypeptide reads, in one-letter code: Coiled-coil domain-containing protein 22 homolog (553 aa).

Residues 236 to 264 (DSEEPAPPPISTVKPDASAEEEASPIQEL) form a disordered region. Coiled-coil stretches lie at residues 261–286 (IQELSDQVEELRVQCETLLAERKAHA), 314–407 (ERTS…QSLA), and 498–549 (NVTK…VEQP).

The protein belongs to the CCDC22 family.

The protein is Coiled-coil domain-containing protein 22 homolog of Drosophila erecta (Fruit fly).